Reading from the N-terminus, the 412-residue chain is Thyroxine-binding globulin (412 aa).

An N-terminal signal peptide occupies residues 1–16 (MPLFLYMVLLVLGIHC). 5 N-linked (GlcNAc...) asparagine glycosylation sites follow: Asn-20, Asn-35, Asn-98, Asn-164, and Asn-252. Positions 292 and 395 each coordinate thyroxine.

The protein belongs to the serpin family. Expressed by the liver and secreted in plasma.

The protein localises to the secreted. In terms of biological role, major thyroid hormone transport protein in serum. The sequence is that of Thyroxine-binding globulin (SERPINA7) from Sus scrofa (Pig).